Reading from the N-terminus, the 117-residue chain is Large ribosomal subunit protein bL19 (117 aa).

Belongs to the bacterial ribosomal protein bL19 family.

This protein is located at the 30S-50S ribosomal subunit interface and may play a role in the structure and function of the aminoacyl-tRNA binding site. The chain is Large ribosomal subunit protein bL19 from Photorhabdus laumondii subsp. laumondii (strain DSM 15139 / CIP 105565 / TT01) (Photorhabdus luminescens subsp. laumondii).